The chain runs to 443 residues: Methylenetetrahydrofolate--tRNA-(uracil-5-)-methyltransferase TrmFO (443 aa).

8 to 13 is an FAD binding site; it reads GAGLAG.

Belongs to the MnmG family. TrmFO subfamily. It depends on FAD as a cofactor.

Its subcellular location is the cytoplasm. The enzyme catalyses uridine(54) in tRNA + (6R)-5,10-methylene-5,6,7,8-tetrahydrofolate + NADH + H(+) = 5-methyluridine(54) in tRNA + (6S)-5,6,7,8-tetrahydrofolate + NAD(+). The catalysed reaction is uridine(54) in tRNA + (6R)-5,10-methylene-5,6,7,8-tetrahydrofolate + NADPH + H(+) = 5-methyluridine(54) in tRNA + (6S)-5,6,7,8-tetrahydrofolate + NADP(+). Catalyzes the folate-dependent formation of 5-methyl-uridine at position 54 (M-5-U54) in all tRNAs. In Thermus thermophilus (strain ATCC BAA-163 / DSM 7039 / HB27), this protein is Methylenetetrahydrofolate--tRNA-(uracil-5-)-methyltransferase TrmFO.